Reading from the N-terminus, the 248-residue chain is Inner membrane protein pE248R (248 aa).

A lipid anchor (N-myristoyl glycine; by host) is attached at Gly2. Residues 2 to 199 (GGSTSKNSFK…ADAISAVFKN (198 aa)) lie on the Cytoplasmic side of the membrane. Residues 200–220 (IMVAAVVIVLIIVGFIAVFYF) traverse the membrane as a helical segment. Residues 221–248 (LHSRHRHEEEEEAEPLISNKVLKNAAVS) lie on the Extracellular side of the membrane.

It belongs to the asfivirus E248R family. In terms of assembly, interacts with A151R.

It localises to the host membrane. It is found in the virion membrane. Its function is as follows. Essential for viral fusion with host endosomal membrane and core release. The protein is Inner membrane protein pE248R of Ornithodoros (relapsing fever ticks).